An 88-amino-acid chain; its full sequence is MGGISIWQLLIIAVIVVLLFGTNKLRTLGSDLGASVKGFKKAMGDENQKETNNAEKTTNDADFDTKNLAQKTSTEEKSTTESKNKEQV.

A helical transmembrane segment spans residues 1 to 21; sequence MGGISIWQLLIIAVIVVLLFG. Residues 41–88 form a disordered region; it reads KAMGDENQKETNNAEKTTNDADFDTKNLAQKTSTEEKSTTESKNKEQV. Basic and acidic residues-rich tracts occupy residues 42–65 and 73–88; these read AMGDENQKETNNAEKTTNDADFDT and STEEKSTTESKNKEQV.

The protein belongs to the TatA/E family. The Tat system comprises two distinct complexes: a TatABC complex, containing multiple copies of TatA, TatB and TatC subunits, and a separate TatA complex, containing only TatA subunits. Substrates initially bind to the TatABC complex, which probably triggers association of the separate TatA complex to form the active translocon.

It is found in the cell inner membrane. Its function is as follows. Part of the twin-arginine translocation (Tat) system that transports large folded proteins containing a characteristic twin-arginine motif in their signal peptide across membranes. TatA could form the protein-conducting channel of the Tat system. The chain is Sec-independent protein translocase protein TatA from Proteus mirabilis (strain HI4320).